Here is a 459-residue protein sequence, read N- to C-terminus: Ribulose bisphosphate carboxylase (459 aa).

Asn111 lines the substrate pocket. Lys166 acts as the Proton acceptor in catalysis. Lys168 contacts substrate. Lys191, Asp193, and Glu194 together coordinate Mg(2+). At Lys191 the chain carries N6-carboxylysine. His287 acts as the Proton acceptor in catalysis. 3 residues coordinate substrate: Arg288, His321, and Ser368.

The protein belongs to the RuBisCO large chain family. Type II subfamily. Homodimer. Mg(2+) serves as cofactor.

It catalyses the reaction 2 (2R)-3-phosphoglycerate + 2 H(+) = D-ribulose 1,5-bisphosphate + CO2 + H2O. The catalysed reaction is D-ribulose 1,5-bisphosphate + O2 = 2-phosphoglycolate + (2R)-3-phosphoglycerate + 2 H(+). Functionally, ruBisCO catalyzes two reactions: the carboxylation of D-ribulose 1,5-bisphosphate, the primary event in carbon dioxide fixation, as well as the oxidative fragmentation of the pentose substrate. Both reactions occur simultaneously and in competition at the same active site. The protein is Ribulose bisphosphate carboxylase of Dechloromonas aromatica (strain RCB).